The primary structure comprises 376 residues: tRNA-specific 2-thiouridylase MnmA (376 aa).

ATP-binding positions include 19 to 26 and methionine 45; that span reads GMSGGVDS. The interaction with target base in tRNA stretch occupies residues 105-107; sequence NPD. Cysteine 110 acts as the Nucleophile in catalysis. Residues cysteine 110 and cysteine 210 are joined by a disulfide bond. Glycine 134 provides a ligand contact to ATP. An interaction with tRNA region spans residues 160 to 162; that stretch reads KDQ. Cysteine 210 serves as the catalytic Cysteine persulfide intermediate. Residues 326–327 form an interaction with tRNA region; the sequence is RY.

This sequence belongs to the MnmA/TRMU family.

It is found in the cytoplasm. It carries out the reaction S-sulfanyl-L-cysteinyl-[protein] + uridine(34) in tRNA + AH2 + ATP = 2-thiouridine(34) in tRNA + L-cysteinyl-[protein] + A + AMP + diphosphate + H(+). Its function is as follows. Catalyzes the 2-thiolation of uridine at the wobble position (U34) of tRNA, leading to the formation of s(2)U34. The polypeptide is tRNA-specific 2-thiouridylase MnmA (Bordetella petrii (strain ATCC BAA-461 / DSM 12804 / CCUG 43448)).